The primary structure comprises 463 residues: Secretogranin-3 (463 aa).

Residues 1–20 (MGPKYVFITAIIGVFWHVQG) form the signal peptide. 3 disordered regions span residues 87-111 (VKRS…DSTK), 225-267 (DDDK…PEED), and 353-398 (EDKN…KGKA). Composition is skewed to basic and acidic residues over residues 102-111 (GTLDDADSTK) and 229-262 (QEGK…RNEL).

Interacts with CHGA. Interacts with secretogranin II/SCG2. Interacts (via C-terminus) with CPE.

The protein localises to the cytoplasmic vesicle. Its subcellular location is the secretory vesicle. The protein resides in the secretory vesicle membrane. It is found in the secreted. Functionally, member of the granin protein family that regulates the biogenesis of secretory granules. Acts as a sorting receptor for intragranular proteins including chromogranin A/CHGA. May also play a role in angiogenesis. Promotes endothelial proliferation, migration and tube formation through MEK/ERK signaling pathway. The sequence is that of Secretogranin-3 (scg3) from Xenopus tropicalis (Western clawed frog).